Here is a 648-residue protein sequence, read N- to C-terminus: ATP-dependent DNA helicase Q1 (648 aa).

The region spanning 100 to 275 (INVTMARKDI…QKILCVGKCL (176 aa)) is the Helicase ATP-binding domain. 113–120 (MPTGGGKS) lines the ATP pocket. Residues 219-222 (DEVH) carry the DEVH box motif. Positions 299–451 (DFTEDIVKLI…EMVSYCQNVS (153 aa)) constitute a Helicase C-terminal domain. 4 residues coordinate Zn(2+): C453, C471, C475, and C478. Residues K514 and K522 each carry the N6-acetyllysine modification. Residue S597 is modified to Phosphoserine. The interval 601 to 648 (ALSEARQVEQVDSKGEEQSSGNSQKSKSRLQPSGSKNAGAKKRKLDDA) is disordered. The span at 606 to 617 (RQVEQVDSKGEE) shows a compositional bias: basic and acidic residues. Residues 618–636 (QSSGNSQKSKSRLQPSGSK) show a composition bias toward polar residues. A Phosphoserine modification is found at S633. The segment covering 639–648 (GAKKRKLDDA) has biased composition (basic residues).

Belongs to the helicase family. RecQ subfamily. As to quaternary structure, may form homodimers or higher order oligomers. Interacts with EXO1. Interacts with MLH1. Interacts with PARP1. Mg(2+) is required as a cofactor. Requires Mn(2+) as cofactor. It depends on Zn(2+) as a cofactor. In terms of tissue distribution, expressed in all tissues examined. As to expression, only expressed in spermatocytes. Expression increases at pachytene (17 days old) and decreases after completion of meiosis II (7 weeks old).

The protein localises to the nucleus. The enzyme catalyses Couples ATP hydrolysis with the unwinding of duplex DNA by translocating in the 3'-5' direction.. It carries out the reaction ATP + H2O = ADP + phosphate + H(+). It catalyses the reaction dATP + H2O = dADP + phosphate + H(+). In terms of biological role, DNA helicase that plays a role in DNA damage repair and genome stability. Exhibits a magnesium- and ATP-dependent DNA-helicase activity that unwinds single- and double-stranded DNA in a 3'-5' direction. Plays a role in restoring regressed replication forks. Required to restart stalled replication forks induced by abortive topoisomerase 1 and 2 lesions. May play a role in the repair of DNA that is damaged by ultraviolet light or other mutagens. The polypeptide is ATP-dependent DNA helicase Q1 (Recql) (Mus musculus (Mouse)).